A 107-amino-acid chain; its full sequence is Small leucine-rich protein 1 (107 aa).

The next 2 helical transmembrane spans lie at 19–39 and 53–73; these read AALV…LAMS and FLFF…IAYF. A disordered region spans residues 85-107; it reads SQNCDRQHNPKDGSSLYQRMKWT.

The protein resides in the membrane. In Homo sapiens (Human), this protein is Small leucine-rich protein 1 (SMLR1).